The following is a 431-amino-acid chain: Neuronal pentraxin-2 (431 aa).

Positions 1-15 (MLALLAASVALAVAA) are cleaved as a signal peptide. Residues Asn-148 and Asn-189 are each glycosylated (N-linked (GlcNAc...) asparagine). The Pentraxin (PTX) domain maps to 223 to 424 (DAFKVSLPLR…GASKWPVETC (202 aa)). A disulfide bond links Cys-253 and Cys-313. Residues Asn-277, Glu-355, Gln-356, Asp-357, and Gln-367 each contribute to the Ca(2+) site. Asn-393 carries N-linked (GlcNAc...) asparagine glycosylation.

In terms of assembly, homooligomer or heterooligomer (probably pentamer) with neuronal pentraxin receptor (NPTXR). Requires Ca(2+) as cofactor. Brain, pancreas, liver, heart and skeletal muscle. Highest levels are seen in the testis.

The protein resides in the secreted. Its function is as follows. Likely to play role in the modification of cellular properties that underlie long-term plasticity. Binds to agar matrix in a calcium-dependent manner. The sequence is that of Neuronal pentraxin-2 (NPTX2) from Homo sapiens (Human).